The sequence spans 448 residues: tRNA modification GTPase MnmE (448 aa).

(6S)-5-formyl-5,6,7,8-tetrahydrofolate contacts are provided by arginine 24, glutamate 81, and lysine 120. Residues 216–373 (GLNVVLVGAP…LKRTLLREAG (158 aa)) enclose the TrmE-type G domain. Asparagine 226 contacts K(+). Residues 226–231 (NVGKSS), 245–251 (TDIAGTT), and 270–273 (DTAG) each bind GTP. Serine 230 contacts Mg(2+). Residues threonine 245, isoleucine 247, and threonine 250 each coordinate K(+). A Mg(2+)-binding site is contributed by threonine 251. A (6S)-5-formyl-5,6,7,8-tetrahydrofolate-binding site is contributed by lysine 448.

The protein belongs to the TRAFAC class TrmE-Era-EngA-EngB-Septin-like GTPase superfamily. TrmE GTPase family. As to quaternary structure, homodimer. Heterotetramer of two MnmE and two MnmG subunits. K(+) serves as cofactor.

It is found in the cytoplasm. Exhibits a very high intrinsic GTPase hydrolysis rate. Involved in the addition of a carboxymethylaminomethyl (cmnm) group at the wobble position (U34) of certain tRNAs, forming tRNA-cmnm(5)s(2)U34. In Neisseria meningitidis serogroup C (strain 053442), this protein is tRNA modification GTPase MnmE.